Consider the following 581-residue polypeptide: Moesin/ezrin/radixin homolog 1 (581 aa).

Residues 8–298 (MNVRVTTMDA…GNHELYMRRR (291 aa)) enclose the FERM domain. The interval 452–519 (QVAKGSRAAA…EERRTLAERN (68 aa)) is disordered. The segment covering 459 to 469 (AAAALQAATTT) has biased composition (low complexity). Over residues 477–486 (EEEENEEELI) the composition is skewed to acidic residues. A compositionally biased stretch (basic and acidic residues) spans 495 to 519 (FSKDFDTDEHIKDPVEERRTLAERN). T562 is modified (phosphothreonine).

Interacts with cytoskeletal actin.

Its subcellular location is the cell junction. It localises to the adherens junction. The protein resides in the cell projection. It is found in the microvillus. The protein localises to the rhabdomere. Its subcellular location is the cell membrane. It localises to the cytoplasm. The protein resides in the cytoskeleton. Its function is as follows. Involved in connections of major cytoskeletal structures to the plasma membrane. This chain is Moesin/ezrin/radixin homolog 1, found in Anopheles gambiae (African malaria mosquito).